The sequence spans 348 residues: tRNA N6-adenosine threonylcarbamoyltransferase (348 aa).

The Fe cation site is built by H115 and H119. Substrate contacts are provided by residues 138-142 (LVSGG), D171, G184, and N276. D304 contacts Fe cation.

This sequence belongs to the KAE1 / TsaD family. Fe(2+) serves as cofactor.

The protein localises to the cytoplasm. It carries out the reaction L-threonylcarbamoyladenylate + adenosine(37) in tRNA = N(6)-L-threonylcarbamoyladenosine(37) in tRNA + AMP + H(+). Functionally, required for the formation of a threonylcarbamoyl group on adenosine at position 37 (t(6)A37) in tRNAs that read codons beginning with adenine. Is involved in the transfer of the threonylcarbamoyl moiety of threonylcarbamoyl-AMP (TC-AMP) to the N6 group of A37, together with TsaE and TsaB. TsaD likely plays a direct catalytic role in this reaction. This Xylella fastidiosa (strain 9a5c) protein is tRNA N6-adenosine threonylcarbamoyltransferase.